A 312-amino-acid polypeptide reads, in one-letter code: NADPH-dependent alpha-keto amide reductase (312 aa).

Glycine 25, threonine 26, arginine 27, and aspartate 59 together coordinate NADPH. Residues tyrosine 64 and histidine 122 each act as proton donor in the active site. Residue serine 123 is modified to Phosphoserine. Serine 157, glutamine 179, serine 208, leucine 210, threonine 257, threonine 258, serine 259, serine 260, lysine 261, and arginine 264 together coordinate NADPH.

It belongs to the aldo/keto reductase family. Monomer. Post-translationally, the N-terminus is blocked.

The protein resides in the cytoplasm. The protein localises to the nucleus. Reduces aromatic alpha-keto amides, aliphatic and aromatic alpha-keto esters, but not beta-keto esters. The protein is NADPH-dependent alpha-keto amide reductase of Saccharomyces cerevisiae (strain ATCC 204508 / S288c) (Baker's yeast).